The following is a 352-amino-acid chain: Dead end protein homolog 1 (352 aa).

RRM domains are found at residues 58–136 (SEVY…RSTE) and 138–218 (CELT…WLKP). Arg336 carries the post-translational modification Omega-N-methylarginine.

As to quaternary structure, interacts with APOBEC3. In terms of tissue distribution, isoform 1 and isoform 2 are expressed in testis. Isoform 1 is expressed continuously in post natal (PN) testis although levels are low between PN1 to PN6. Isoform 2 is expressed from PN 20 onwards. Isoform 2 is strongly expressed in meiotic and in post-meiotic germ cells of the testis with highest expression at the elongated spermatid stage (at protein level). Expressed in testis and heart. Expressed in germ cells and genital ridges. Not detected in testicular tumors.

The protein resides in the nucleus. It is found in the cytoplasm. Functionally, RNA-binding factor that positively regulates gene expression by prohibiting miRNA-mediated gene suppression. Relieves miRNA repression in germline cells. Prohibits the function of several miRNAs by blocking the accessibility of target mRNAs. Sequence-specific RNA-binding factor that binds specifically to U-rich regions (URRs) in the 3' untranslated region (3'-UTR) of several mRNAs. Does not bind to miRNAs. Isoform 1 may play a role during primordial germ cell (PGC) survival. However, does not seem to be essential for PGC migration. The protein is Dead end protein homolog 1 (Dnd1) of Mus musculus (Mouse).